The sequence spans 531 residues: Coiled-coil domain-containing protein 9 (531 aa).

The disordered stretch occupies residues 40-531 (EDRKKAELEG…PGEAWPFESV (492 aa)). Positions 59–72 (RSVEKENVAVESEK) are enriched in basic and acidic residues. Ser80 bears the Phosphoserine mark. Thr95 carries the post-translational modification Phosphothreonine. Arg107 carries the post-translational modification Omega-N-methylarginine. Phosphoserine is present on Ser111. Residues Arg121, Arg128, and Arg130 each carry the omega-N-methylarginine modification. An asymmetric dimethylarginine mark is found at Arg131, Arg133, and Arg135. At Ser137 the chain carries Phosphoserine. Basic and acidic residues-rich tracts occupy residues 148-185 (ISDR…REGV), 194-217 (FLDD…EESR), and 227-241 (DFER…ERQG). Residues 149-185 (SDRKSKEWEERRRQNIEKMNEEMEKIAEYERNQREGV) adopt a coiled-coil conformation. A Phosphoserine modification is found at Ser202. Residues Ser248 and Ser255 each carry the phosphoserine modification. Composition is skewed to basic and acidic residues over residues 258-279 (GRER…QERL), 289-302 (WRRE…DGMF), 311-320 (EPSHRYDDQA), and 361-372 (YSDHDDRWETKE). A phosphoserine mark is found at Ser376, Ser386, and Ser390. The span at 386-395 (SPETSPKETP) shows a compositional bias: low complexity. The span at 396-406 (MQPPEIPAPAH) shows a compositional bias: pro residues. Acidic residues predominate over residues 411–446 (DEGEENEGEEDEEWEDISEDEEEEEIEVEEGDEEEP). Ser521 is subject to Phosphoserine.

Probable component of the exon junction complex (EJC); the association is RNA-dependent.

Probable component of the exon junction complex (EJC), a multiprotein complex that associates immediately upstream of the exon-exon junction on mRNAs and serves as a positional landmark for the intron exon structure of genes and directs post-transcriptional processes in the cytoplasm such as mRNA export, nonsense-mediated mRNA decay (NMD) or translation. This Homo sapiens (Human) protein is Coiled-coil domain-containing protein 9.